The chain runs to 141 residues: Hemoglobin subunit beta-C(NA) (141 aa).

One can recognise a Globin domain in the interval 1–141 (PBKALITGFW…VASALAHRYH (141 aa)). Heme b contacts are provided by His58 and His87.

Belongs to the globin family. Heterotetramer of two alpha chains and two beta chains. Red blood cells.

Its function is as follows. Involved in oxygen transport from the lung to the various peripheral tissues. The polypeptide is Hemoglobin subunit beta-C(NA) (Ammotragus lervia (Barbary sheep)).